The chain runs to 178 residues: Transcription factor E (178 aa).

Residues 4–88 form the HTH TFE/IIEalpha-type domain; that stretch reads AEDLFINLAK…YWKPNIDQIN (85 aa).

Belongs to the TFE family. As to quaternary structure, monomer. Interaction with RNA polymerase subunits RpoF and RpoE is necessary for Tfe stimulatory transcription activity. Able to interact with Tbp and RNA polymerase in the absence of DNA promoter. Interacts both with the preinitiation and elongation complexes.

Its function is as follows. Transcription factor that plays a role in the activation of archaeal genes transcribed by RNA polymerase. Facilitates transcription initiation by enhancing TATA-box recognition by TATA-box-binding protein (Tbp), and transcription factor B (Tfb) and RNA polymerase recruitment. Not absolutely required for transcription in vitro, but particularly important in cases where Tbp or Tfb function is not optimal. It dynamically alters the nucleic acid-binding properties of RNA polymerases by stabilizing the initiation complex and destabilizing elongation complexes. Seems to translocate with the RNA polymerase following initiation and acts by binding to the non template strand of the transcription bubble in elongation complexes. The protein is Transcription factor E of Saccharolobus islandicus (strain L.S.2.15 / Lassen #1) (Sulfolobus islandicus).